The following is a 295-amino-acid chain: Ribosomal protein L11 methyltransferase (295 aa).

Positions 146, 167, 189, and 231 each coordinate S-adenosyl-L-methionine.

The protein belongs to the methyltransferase superfamily. PrmA family.

The protein resides in the cytoplasm. The catalysed reaction is L-lysyl-[protein] + 3 S-adenosyl-L-methionine = N(6),N(6),N(6)-trimethyl-L-lysyl-[protein] + 3 S-adenosyl-L-homocysteine + 3 H(+). Functionally, methylates ribosomal protein L11. The polypeptide is Ribosomal protein L11 methyltransferase (Vibrio campbellii (strain ATCC BAA-1116)).